The sequence spans 570 residues: Proline--tRNA ligase (570 aa).

It belongs to the class-II aminoacyl-tRNA synthetase family. ProS type 1 subfamily. Homodimer.

It is found in the cytoplasm. The enzyme catalyses tRNA(Pro) + L-proline + ATP = L-prolyl-tRNA(Pro) + AMP + diphosphate. Catalyzes the attachment of proline to tRNA(Pro) in a two-step reaction: proline is first activated by ATP to form Pro-AMP and then transferred to the acceptor end of tRNA(Pro). As ProRS can inadvertently accommodate and process non-cognate amino acids such as alanine and cysteine, to avoid such errors it has two additional distinct editing activities against alanine. One activity is designated as 'pretransfer' editing and involves the tRNA(Pro)-independent hydrolysis of activated Ala-AMP. The other activity is designated 'posttransfer' editing and involves deacylation of mischarged Ala-tRNA(Pro). The misacylated Cys-tRNA(Pro) is not edited by ProRS. This Clostridium botulinum (strain Eklund 17B / Type B) protein is Proline--tRNA ligase.